A 334-amino-acid polypeptide reads, in one-letter code: ADP-L-glycero-D-manno-heptose-6-epimerase (334 aa).

Residues phenylalanine 11–isoleucine 12, aspartate 32–asparagine 33, lysine 39, lysine 54, glutamine 77–serine 81, and asparagine 94 contribute to the NADP(+) site. The active-site Proton acceptor is the tyrosine 141. Lysine 145 is a binding site for NADP(+). Residue asparagine 171 coordinates substrate. Residues valine 172 and lysine 180 each coordinate NADP(+). Lysine 180 functions as the Proton acceptor in the catalytic mechanism. Substrate contacts are provided by residues arginine 182, histidine 189, phenylalanine 203–asparagine 206, arginine 216, and tyrosine 295.

The protein belongs to the NAD(P)-dependent epimerase/dehydratase family. HldD subfamily. As to quaternary structure, homopentamer. The cofactor is NADP(+).

It carries out the reaction ADP-D-glycero-beta-D-manno-heptose = ADP-L-glycero-beta-D-manno-heptose. The protein operates within nucleotide-sugar biosynthesis; ADP-L-glycero-beta-D-manno-heptose biosynthesis; ADP-L-glycero-beta-D-manno-heptose from D-glycero-beta-D-manno-heptose 7-phosphate: step 4/4. Its pathway is bacterial outer membrane biogenesis; LOS core biosynthesis. Functionally, catalyzes the interconversion between ADP-D-glycero-beta-D-manno-heptose and ADP-L-glycero-beta-D-manno-heptose via an epimerization at carbon 6 of the heptose. The polypeptide is ADP-L-glycero-D-manno-heptose-6-epimerase (Neisseria meningitidis serogroup A / serotype 4A (strain DSM 15465 / Z2491)).